Consider the following 268-residue polypeptide: Undecaprenyl-diphosphatase (268 aa).

The next 7 helical transmembrane spans lie at 41 to 61 (LAYS…LIYF), 81 to 101 (WLTY…PLYM), 106 to 126 (YLLL…AVIF), 146 to 166 (MTLG…LPGI), 191 to 211 (FVLV…SEGG), 213 to 233 (VATP…LVTI), and 245 to 265 (VTLV…TRIL).

It belongs to the UppP family.

The protein resides in the cell membrane. It catalyses the reaction di-trans,octa-cis-undecaprenyl diphosphate + H2O = di-trans,octa-cis-undecaprenyl phosphate + phosphate + H(+). Catalyzes the dephosphorylation of undecaprenyl diphosphate (UPP). The sequence is that of Undecaprenyl-diphosphatase from Pyrobaculum islandicum (strain DSM 4184 / JCM 9189 / GEO3).